A 128-amino-acid polypeptide reads, in one-letter code: Large ribosomal subunit protein bL20c (128 aa).

It belongs to the bacterial ribosomal protein bL20 family.

The protein localises to the plastid. Its function is as follows. Binds directly to 23S ribosomal RNA and is necessary for the in vitro assembly process of the 50S ribosomal subunit. It is not involved in the protein synthesizing functions of that subunit. The protein is Large ribosomal subunit protein bL20c (rpl20) of Lathraea clandestina (Purple toothwort).